A 900-amino-acid polypeptide reads, in one-letter code: Minor teichoic acid biosynthesis protein GgaB (900 aa).

It belongs to the glycosyltransferase 2 family.

Its pathway is cell wall biogenesis; poly(glucopyranosyl N-acetylgalactosamine 1-phosphate) teichoic acid biosynthesis. Its function is as follows. Involved in the biosynthesis of galactosamine-containing minor teichoic acid, a non-essential cell wall polymer in B.subtilis 168. In Bacillus subtilis (strain 168), this protein is Minor teichoic acid biosynthesis protein GgaB (ggaB).